Consider the following 639-residue polypeptide: Collagen alpha-1(XII) chain (639 aa).

Positions 1 to 114 (CRKSLLQAVA…DSLSKIVDDL (114 aa)) constitute a VWFA domain. Fibronectin type-III domains lie at 130-219 (APSN…LPVP), 220-310 (IVSL…LPLP), 311-401 (RPQD…VPAP), 402-490 (TNLR…SPKS), 491-585 (GPRN…TVRN), and 586-639 (LRVY…LRNL). A disordered region spans residues 473-496 (DESESDDLTGSERTSPKSGPRNLQ).

It belongs to the fibril-associated collagens with interrupted helices (FACIT) family. As to quaternary structure, trimer of identical chains each containing 190 kDa of non-triple-helical sequences. Post-translationally, the triple-helical tail is stabilized by disulfide bonds at each end. Prolines at the third position of the tripeptide repeating unit (G-X-Y) are hydroxylated in some or all of the chains. In terms of processing, O-glycosylated; glycosaminoglycan of chondroitin-sulfate type.

The protein localises to the secreted. It localises to the extracellular space. Its subcellular location is the extracellular matrix. Type XII collagen interacts with type I collagen-containing fibrils, the COL1 domain could be associated with the surface of the fibrils, and the COL2 and NC3 domains may be localized in the perifibrillar matrix. This chain is Collagen alpha-1(XII) chain (COL12A1), found in Oryctolagus cuniculus (Rabbit).